We begin with the raw amino-acid sequence, 114 residues long: uncharacterized protein (114 aa).

The HTH arsR-type domain maps to 2 to 97; sequence ESEPLYKLKA…VARKVLARVL (96 aa). The H-T-H motif DNA-binding region spans 37–60; it reads GELLSSDVGLESSNLSQQLGVLRR.

This is an uncharacterized protein from Mycobacterium tuberculosis (strain CDC 1551 / Oshkosh).